The sequence spans 113 residues: uncharacterized protein (113 aa).

A CHY-type; degenerate zinc finger spans residues 16-96; that stretch reads LVDNETRCFH…STVHCKYCNH (81 aa). Cysteine 23, histidine 25, cysteine 46, cysteine 49, cysteine 73, cysteine 76, cysteine 91, and cysteine 94 together coordinate Zn(2+).

Its subcellular location is the cytoplasm. The protein localises to the nucleus. This is an uncharacterized protein from Schizosaccharomyces pombe (strain 972 / ATCC 24843) (Fission yeast).